The sequence spans 197 residues: Carnitine operon protein CaiE (197 aa).

The segment at 177–197 is disordered; that stretch reads TAPEANRPRLRGTTEVKPKGQ. Over residues 188 to 197 the composition is skewed to basic and acidic residues; that stretch reads GTTEVKPKGQ.

This sequence belongs to the transferase hexapeptide repeat family.

Its pathway is amine and polyamine metabolism; carnitine metabolism. Functionally, overproduction of CaiE stimulates the activity of CaiB and CaiD. The sequence is that of Carnitine operon protein CaiE from Proteus sp. (strain LE138).